The chain runs to 136 residues: Large ribosomal subunit protein uL16 (136 aa).

It belongs to the universal ribosomal protein uL16 family. In terms of assembly, part of the 50S ribosomal subunit.

Its function is as follows. Binds 23S rRNA and is also seen to make contacts with the A and possibly P site tRNAs. The chain is Large ribosomal subunit protein uL16 from Ruthia magnifica subsp. Calyptogena magnifica.